The primary structure comprises 447 residues: Chitobiosyldiphosphodolichol beta-mannosyltransferase (447 aa).

Residues 1–8 (MSVFGFDN) are Lumenal-facing. Residues 9–29 (IPTWLWWLLAIYLATPFVLYV) traverse the membrane as a helical segment. At 30 to 127 (VQPYLFYEGK…LCSMFWKLRA (98 aa)) the chain is on the cytoplasmic side. The segment at residues 128 to 148 (VDYILLQNPPTIPILPIAVVV) is an intramembrane region (helical). Topologically, residues 149 to 447 (KTFSRAKLII…ALSELKIIHK (299 aa)) are lumenal.

Belongs to the glycosyltransferase group 1 family.

It is found in the endoplasmic reticulum membrane. The enzyme catalyses an N,N'-diacetylchitobiosyl-diphospho-di-trans,poly-cis-dolichol + GDP-alpha-D-mannose = a beta-D-Man-(1-&gt;4)-beta-D-GlcNAc-(1-&gt;4)-alpha-D-GlcNAc-diphospho-di-trans,poly-cis-dolichol + GDP + H(+). It participates in protein modification; protein glycosylation. Its function is as follows. Participates in the formation of the lipid-linked precursor oligosaccharide for N-glycosylation. Involved in assembling the dolichol-pyrophosphate-GlcNAc(2)-Man(5) intermediate on the cytoplasmic surface of the ER. This chain is Chitobiosyldiphosphodolichol beta-mannosyltransferase (ALG1), found in Kluyveromyces lactis (strain ATCC 8585 / CBS 2359 / DSM 70799 / NBRC 1267 / NRRL Y-1140 / WM37) (Yeast).